We begin with the raw amino-acid sequence, 109 residues long: MSQEIAVVGSPEFTTGFRLAGVRKFENIPDDEKDERLDDAVERTLDDEGTGIIVMHTDDLDHLSRGTREAVEGSIEPVLVTLGGSGAGSGGLRDQIKRAIGIDLMEEDD.

This sequence belongs to the V-ATPase F subunit family. As to quaternary structure, has multiple subunits with at least A(3), B(3), C, D, E, F, H, I and proteolipid K(x).

The protein localises to the cell membrane. In terms of biological role, component of the A-type ATP synthase that produces ATP from ADP in the presence of a proton gradient across the membrane. The chain is A-type ATP synthase subunit F from Halorubrum lacusprofundi (strain ATCC 49239 / DSM 5036 / JCM 8891 / ACAM 34).